Reading from the N-terminus, the 760-residue chain is Metal transporter cnnm-2 (760 aa).

The signal sequence occupies residues 1-21 (MIIKVFLRLLLLCAHIVCIDG). Residues 22-153 (KLEIRPVVSG…ETFMPVWAQC (132 aa)) are Extracellular-facing. An N-linked (GlcNAc...) asparagine glycan is attached at asparagine 88. The 179-residue stretch at 145–323 (TFMPVWAQCA…MENDACDIDL (179 aa)) folds into the CNNM transmembrane domain. Residues 154–174 (AILCLLFSISALCSGLTLGLM) traverse the membrane as a helical segment. Over 175–208 (ALTPQELSILMKSGSQREKKHAAAIYPIRCHGNR) the chain is Cytoplasmic. The helical transmembrane segment at 209–229 (LLCTVIIMNVIVNTGITLLFD) threads the bilayer. Residue aspartate 230 is a topological domain, extracellular. A helical membrane pass occupies residues 231–251 (LAEGLIAFVASTVGIVVFGEI). Residues 252–261 (LPQSICVKYG) lie on the Cytoplasmic side of the membrane. The helical transmembrane segment at 262–282 (LAVGANTIFITKFFMFLLFPI) threads the bilayer. At 283 to 760 (TWPLGKILDK…SVEELKPLME (478 aa)) the chain is on the extracellular side. 2 N-linked (GlcNAc...) asparagine glycosylation sites follow: asparagine 302 and asparagine 403. 2 CBS domains span residues 344 to 406 (MTDI…NITV) and 442 to 512 (MVAK…ITDE). Asparagine 528, asparagine 592, and asparagine 667 each carry an N-linked (GlcNAc...) asparagine glycan. The interval 708–734 (DDFGSPTRKASILDSSPNSRKRSSTSV) is disordered.

Belongs to the ACDP family.

The protein localises to the cell membrane. Its function is as follows. Probable metal transporter. Probably acts redundantly with the other metal transport proteins cnnm-1, cnnm-3, cnnm-4 and cnnm-5 to regulate Mg(2+) homeostasis. This is Metal transporter cnnm-2 from Caenorhabditis elegans.